Reading from the N-terminus, the 99-residue chain is Aspartyl/glutamyl-tRNA(Asn/Gln) amidotransferase subunit C (99 aa).

It belongs to the GatC family. As to quaternary structure, heterotrimer of A, B and C subunits.

It carries out the reaction L-glutamyl-tRNA(Gln) + L-glutamine + ATP + H2O = L-glutaminyl-tRNA(Gln) + L-glutamate + ADP + phosphate + H(+). The enzyme catalyses L-aspartyl-tRNA(Asn) + L-glutamine + ATP + H2O = L-asparaginyl-tRNA(Asn) + L-glutamate + ADP + phosphate + 2 H(+). Functionally, allows the formation of correctly charged Asn-tRNA(Asn) or Gln-tRNA(Gln) through the transamidation of misacylated Asp-tRNA(Asn) or Glu-tRNA(Gln) in organisms which lack either or both of asparaginyl-tRNA or glutaminyl-tRNA synthetases. The reaction takes place in the presence of glutamine and ATP through an activated phospho-Asp-tRNA(Asn) or phospho-Glu-tRNA(Gln). The polypeptide is Aspartyl/glutamyl-tRNA(Asn/Gln) amidotransferase subunit C (Cupriavidus taiwanensis (strain DSM 17343 / BCRC 17206 / CCUG 44338 / CIP 107171 / LMG 19424 / R1) (Ralstonia taiwanensis (strain LMG 19424))).